The primary structure comprises 70 residues: Cold shock-like protein CspB (70 aa).

In terms of domain architecture, CSD spans 7–67 (GLVKWFDAGK…GQKGPSAVNV (61 aa)).

The protein resides in the cytoplasm. The chain is Cold shock-like protein CspB (cspB) from Yersinia enterocolitica.